Consider the following 252-residue polypeptide: Acyltransferase PGAP2 (252 aa).

The Cytoplasmic segment spans residues 1 to 22; the sequence is MVPVGPERGANSLFSLRFTTFA. A helical transmembrane segment spans residues 23 to 43; it reads VGTVSLPLFAFLFCIVWSLLF. The Lumenal portion of the chain corresponds to 44–77; it reads NFSETTATHCHVPNYLPSVSAAIGGETPQRYIWR. The helical transmembrane segment at 78 to 98 threads the bilayer; that stretch reads LCIGLHSAPRFLVGVAYLHYY. Residues 99 to 111 lie on the Cytoplasmic side of the membrane; it reads QGTPCSSPAYPRL. A helical membrane pass occupies residues 112–132; it reads CHLNFLLNCCEIFFLILLTYV. Residues 133 to 142 lie on the Lumenal side of the membrane; the sequence is SSSENYEVHK. Residues 143 to 163 form a helical membrane-spanning segment; that stretch reads LGFMAFMLFSVGYMFVTCSLW. At 164–184 the chain is on the cytoplasmic side; it reads RVARKGSGSLEERTSYAWKKR. The chain crosses the membrane as a helical span at residues 185-205; sequence LFGFYLLMFLSSILVYIWHNM. At 206–208 the chain is on the lumenal side; that stretch reads YCE. Residues 209–229 form a helical membrane-spanning segment; that stretch reads AGVYTVFALLEYLVVLSNMGF. At 230–252 the chain is on the cytoplasmic side; sequence HMTAWWDFGNKELMICSPGDKRI.

This sequence belongs to the PGAP2 family.

It is found in the golgi apparatus membrane. In terms of biological role, involved in the fatty acid remodeling steps of GPI-anchor maturation where the unsaturated acyl chain at sn-2 of inositol phosphate is replaced by a saturated stearoyl chain. May catalyze the second step of the fatty acid remodeling, by reacylating a lyso-GPI intermediate at sn-2 of inositol phosphate by a saturated chain. The fatty acid remodeling steps is critical for the integration of GPI-APs into lipid rafts. The chain is Acyltransferase PGAP2 from Xenopus tropicalis (Western clawed frog).